Here is a 203-residue protein sequence, read N- to C-terminus: Endoplasmic reticulum transmembrane protein 3 (203 aa).

Over 1–6 (MSLYYT) the chain is Lumenal. A helical transmembrane segment spans residues 7-27 (LVFAILVVEIFMFSILALPIP). Over 28-45 (SRYRRPLTLLLLKPFKSS) the chain is Cytoplasmic. A helical transmembrane segment spans residues 46–66 (TVQVAIKCVLGFILLLFIDCI). Over 67 to 110 (NRVYSIDKELQLSSASQNNGAIIAQDRIEVLSRKFFAQRNMYLT) the chain is Lumenal. Residues 111 to 131 (GITLFLTFVVVRTFGLVIELL) traverse the membrane as a helical segment. Topologically, residues 132–203 (TMKDIYRASP…KSESLQEEIN (72 aa)) are cytoplasmic. Positions 142–171 (PVASSDVKKNDSVTAEAAAQSGASKDDHGD) are disordered.

This sequence belongs to the BCAP29/BCAP31 family.

It localises to the endoplasmic reticulum membrane. Its function is as follows. May play a role in anterograde transport of membrane proteins from the endoplasmic reticulum to the Golgi. May be involved in invertase secretion. This Saccharomyces cerevisiae (strain ATCC 204508 / S288c) (Baker's yeast) protein is Endoplasmic reticulum transmembrane protein 3 (YET3).